The sequence spans 239 residues: tRNA (guanine-N(1)-)-methyltransferase (239 aa).

Residues glycine 108 and 128–133 each bind S-adenosyl-L-methionine; that span reads VGNFIV.

This sequence belongs to the RNA methyltransferase TrmD family. In terms of assembly, homodimer.

Its subcellular location is the cytoplasm. The catalysed reaction is guanosine(37) in tRNA + S-adenosyl-L-methionine = N(1)-methylguanosine(37) in tRNA + S-adenosyl-L-homocysteine + H(+). In terms of biological role, specifically methylates guanosine-37 in various tRNAs. The protein is tRNA (guanine-N(1)-)-methyltransferase of Helicobacter hepaticus (strain ATCC 51449 / 3B1).